A 432-amino-acid polypeptide reads, in one-letter code: Bifunctional protein GlmU (432 aa).

A pyrophosphorylase region spans residues 1-223; it reads MGKKSIIILA…EENFKGVNSK (223 aa). Residues 9-12, Lys23, Gln75, and 82-83 contribute to the UDP-N-acetyl-alpha-D-glucosamine site; these read LAAG and GT. A Mg(2+)-binding site is contributed by Asp103. Positions 135, 149, 164, and 221 each coordinate UDP-N-acetyl-alpha-D-glucosamine. Asn221 provides a ligand contact to Mg(2+). The interval 224–244 is linker; the sequence is VELADAEVIHQNRIKKEFMKA. Residues 245–432 are N-acetyltransferase; that stretch reads GVIMRLPDTI…FYKHFSSKKK (188 aa). Residues Arg308 and Lys325 each coordinate UDP-N-acetyl-alpha-D-glucosamine. His336 acts as the Proton acceptor in catalysis. Tyr339 and Asn350 together coordinate UDP-N-acetyl-alpha-D-glucosamine. Residues 359–360, Ser378, Ala396, and Arg413 contribute to the acetyl-CoA site; that span reads NY.

The protein in the N-terminal section; belongs to the N-acetylglucosamine-1-phosphate uridyltransferase family. It in the C-terminal section; belongs to the transferase hexapeptide repeat family. In terms of assembly, homotrimer. It depends on Mg(2+) as a cofactor.

The protein localises to the cytoplasm. The catalysed reaction is alpha-D-glucosamine 1-phosphate + acetyl-CoA = N-acetyl-alpha-D-glucosamine 1-phosphate + CoA + H(+). The enzyme catalyses N-acetyl-alpha-D-glucosamine 1-phosphate + UTP + H(+) = UDP-N-acetyl-alpha-D-glucosamine + diphosphate. Its pathway is nucleotide-sugar biosynthesis; UDP-N-acetyl-alpha-D-glucosamine biosynthesis; N-acetyl-alpha-D-glucosamine 1-phosphate from alpha-D-glucosamine 6-phosphate (route II): step 2/2. It functions in the pathway nucleotide-sugar biosynthesis; UDP-N-acetyl-alpha-D-glucosamine biosynthesis; UDP-N-acetyl-alpha-D-glucosamine from N-acetyl-alpha-D-glucosamine 1-phosphate: step 1/1. The protein operates within bacterial outer membrane biogenesis; LPS lipid A biosynthesis. Catalyzes the last two sequential reactions in the de novo biosynthetic pathway for UDP-N-acetylglucosamine (UDP-GlcNAc). The C-terminal domain catalyzes the transfer of acetyl group from acetyl coenzyme A to glucosamine-1-phosphate (GlcN-1-P) to produce N-acetylglucosamine-1-phosphate (GlcNAc-1-P), which is converted into UDP-GlcNAc by the transfer of uridine 5-monophosphate (from uridine 5-triphosphate), a reaction catalyzed by the N-terminal domain. This Aliarcobacter butzleri (strain RM4018) (Arcobacter butzleri) protein is Bifunctional protein GlmU.